The following is a 207-amino-acid chain: Protein 6b (207 aa).

Positions 161–185 (NTLEEGEDDDDEMDDEGEAGGAEPR) are disordered. Acidic residues predominate over residues 164–178 (EEGEDDDDEMDDEGE).

Its function is as follows. Involved in tumor formation and increases auxin and cytokinin effects in host plants. The sequence is that of Protein 6b (6b) from Agrobacterium tumefaciens (strain 15955).